The chain runs to 198 residues: NAD(P)H dehydrogenase (quinone) (198 aa).

In terms of domain architecture, Flavodoxin-like spans 4–189; the sequence is ILVLYYSMYG…SIARYQGEYV (186 aa). FMN-binding positions include 10–15 and 78–80; these read SMYGHI and TRF. Tyr12 is an NAD(+) binding site. Trp98 is a binding site for substrate. FMN is bound by residues 113-118 and His133; that span reads STGTGG.

It belongs to the WrbA family. FMN is required as a cofactor.

The enzyme catalyses a quinone + NADH + H(+) = a quinol + NAD(+). The catalysed reaction is a quinone + NADPH + H(+) = a quinol + NADP(+). In Citrobacter koseri (strain ATCC BAA-895 / CDC 4225-83 / SGSC4696), this protein is NAD(P)H dehydrogenase (quinone).